The chain runs to 130 residues: Small ribosomal subunit protein uS9 (130 aa).

Belongs to the universal ribosomal protein uS9 family.

This is Small ribosomal subunit protein uS9 from Salmonella paratyphi C (strain RKS4594).